Reading from the N-terminus, the 165-residue chain is Large ribosomal subunit protein uL10 (165 aa).

This sequence belongs to the universal ribosomal protein uL10 family. As to quaternary structure, part of the ribosomal stalk of the 50S ribosomal subunit. The N-terminus interacts with L11 and the large rRNA to form the base of the stalk. The C-terminus forms an elongated spine to which L12 dimers bind in a sequential fashion forming a multimeric L10(L12)X complex.

Its function is as follows. Forms part of the ribosomal stalk, playing a central role in the interaction of the ribosome with GTP-bound translation factors. This Hamiltonella defensa subsp. Acyrthosiphon pisum (strain 5AT) protein is Large ribosomal subunit protein uL10.